Consider the following 241-residue polypeptide: Probable transcriptional regulatory protein Maqu_2154 (241 aa).

The protein belongs to the TACO1 family.

The protein localises to the cytoplasm. In Marinobacter nauticus (strain ATCC 700491 / DSM 11845 / VT8) (Marinobacter aquaeolei), this protein is Probable transcriptional regulatory protein Maqu_2154.